The following is a 766-amino-acid chain: Dipeptidyl peptidase 4 (766 aa).

Residues 1–6 (MKTPWK) are Cytoplasmic-facing. The chain crosses the membrane as a helical; Signal-anchor for type II membrane protein span at residues 7 to 27 (VLLGLLGIAALVTVITVPVVL). The Extracellular portion of the chain corresponds to 28-766 (LNKGTDDAAA…HFLKQCFSLP (739 aa)). N-linked (GlcNAc...) asparagine glycans are attached at residues asparagine 85, asparagine 92, asparagine 150, asparagine 179, asparagine 219, asparagine 229, asparagine 279, and asparagine 321. Disulfide bonds link cysteine 385–cysteine 394, cysteine 444–cysteine 447, and cysteine 454–cysteine 472. The Charge relay system role is filled by serine 630. Residues cysteine 649 and cysteine 762 are joined by a disulfide bond. Asparagine 685 carries N-linked (GlcNAc...) asparagine glycosylation. Residues aspartate 708 and histidine 740 each act as charge relay system in the active site.

The protein belongs to the peptidase S9B family. DPPIV subfamily. As to quaternary structure, monomer. Homodimer. Heterodimer with Seprase (FAP). Requires homodimerization for optimal dipeptidyl peptidase activity and T-cell costimulation. Found in a membrane raft complex, at least composed of BCL10, CARD11, DPP4 and IKBKB. Associates with collagen. Interacts with PTPRC; the interaction is enhanced in an interleukin-12-dependent manner in activated lymphocytes. Interacts (via extracellular domain) with ADA; does not inhibit its dipeptidyl peptidase activity. Interacts with CAV1 (via the N-terminus); the interaction is direct. Interacts (via cytoplasmic tail) with CARD11 (via PDZ domain); its homodimerization is necessary for interaction with CARD11. Interacts with IGF2R; the interaction is direct. Interacts with GPC3. In terms of processing, the soluble form (Dipeptidyl peptidase 4 soluble form also named SDPP) derives from the membrane form (Dipeptidyl peptidase 4 membrane form also named MDPP) by proteolytic processing. Post-translationally, N- and O-Glycosylated. Phosphorylated. Mannose 6-phosphate residues in the carbohydrate moiety are necessary for interaction with IGF2R in activated T-cells. Mannose 6-phosphorylation is induced during T-cell activation.

It localises to the secreted. Its subcellular location is the cell membrane. The protein resides in the apical cell membrane. The protein localises to the cell projection. It is found in the invadopodium membrane. It localises to the lamellipodium membrane. Its subcellular location is the cell junction. The protein resides in the membrane raft. It carries out the reaction Release of an N-terminal dipeptide, Xaa-Yaa-|-Zaa-, from a polypeptide, preferentially when Yaa is Pro, provided Zaa is neither Pro nor hydroxyproline.. With respect to regulation, inhibited by GPC3 and diprotin A. Its function is as follows. Cell surface glycoprotein receptor involved in the costimulatory signal essential for T-cell receptor (TCR)-mediated T-cell activation. Acts as a positive regulator of T-cell coactivation, by binding at least ADA, CAV1, IGF2R, and PTPRC. Its binding to CAV1 and CARD11 induces T-cell proliferation and NF-kappa-B activation in a T-cell receptor/CD3-dependent manner. Its interaction with ADA also regulates lymphocyte-epithelial cell adhesion. In association with FAP is involved in the pericellular proteolysis of the extracellular matrix (ECM), the migration and invasion of endothelial cells into the ECM. May be involved in the promotion of lymphatic endothelial cells adhesion, migration and tube formation. When overexpressed, enhanced cell proliferation, a process inhibited by GPC3. Also acts as a serine exopeptidase with a dipeptidyl peptidase activity that regulates various physiological processes by cleaving peptides in the circulation, including many chemokines, mitogenic growth factors, neuropeptides and peptide hormones such as brain natriuretic peptide 32. Removes N-terminal dipeptides sequentially from polypeptides having unsubstituted N-termini provided that the penultimate residue is proline. This chain is Dipeptidyl peptidase 4 (DPP4), found in Sus scrofa (Pig).